Consider the following 75-residue polypeptide: uncharacterized protein (75 aa).

This is an uncharacterized protein from Bovine papillomavirus type 3.